Consider the following 333-residue polypeptide: DNA-directed RNA polymerase subunit alpha (333 aa).

The alpha N-terminal domain (alpha-NTD) stretch occupies residues 1-234; it reads MQISVNEFLT…QQLAAFVDLK (234 aa). The alpha C-terminal domain (alpha-CTD) stretch occupies residues 248–333; it reads IDPILLRPVD…SLKKDDKATA (86 aa).

The protein belongs to the RNA polymerase alpha chain family. Homodimer. The RNAP catalytic core consists of 2 alpha, 1 beta, 1 beta' and 1 omega subunit. When a sigma factor is associated with the core the holoenzyme is formed, which can initiate transcription.

It catalyses the reaction RNA(n) + a ribonucleoside 5'-triphosphate = RNA(n+1) + diphosphate. Its function is as follows. DNA-dependent RNA polymerase catalyzes the transcription of DNA into RNA using the four ribonucleoside triphosphates as substrates. In Pseudomonas syringae pv. tomato (strain ATCC BAA-871 / DC3000), this protein is DNA-directed RNA polymerase subunit alpha.